Reading from the N-terminus, the 121-residue chain is Snaclec coagulation factor IX-binding protein subunit A (121 aa).

The C-type lectin domain maps to 1-120; that stretch reads YEGHCYQTFK…CGERNPFVCE (120 aa). Intrachain disulfides connect cysteine 22–cysteine 119 and cysteine 94–cysteine 111. The Ca(2+) site is built by serine 33, glutamate 35, and glutamate 39. Residue glutamate 120 participates in Ca(2+) binding.

The protein belongs to the snaclec family. Heterodimer of subunits A and B; disulfide-linked. As to expression, expressed by the venom gland.

It localises to the secreted. Functionally, anticoagulant protein which binds to the gamma-carboxyglutamic acid-domain regions of factor IX (F9) (but not factor X) in the presence of calcium with a 1 to 1 stoichiometry. This is Snaclec coagulation factor IX-binding protein subunit A from Gloydius halys (Chinese water mocassin).